The chain runs to 143 residues: Transcriptional regulator MraZ (143 aa).

2 SpoVT-AbrB domains span residues 5–47 (TYTP…PRAA) and 76–119 (TDEQ…DAQA).

This sequence belongs to the MraZ family. In terms of assembly, forms oligomers.

Its subcellular location is the cytoplasm. It is found in the nucleoid. The polypeptide is Transcriptional regulator MraZ (Mycobacterium bovis (strain ATCC BAA-935 / AF2122/97)).